We begin with the raw amino-acid sequence, 160 residues long: Ribosomal RNA large subunit methyltransferase H (160 aa).

Residues Leu-76 and Gly-108 each contribute to the S-adenosyl-L-methionine site.

Belongs to the RNA methyltransferase RlmH family. In terms of assembly, homodimer.

It localises to the cytoplasm. It catalyses the reaction pseudouridine(1915) in 23S rRNA + S-adenosyl-L-methionine = N(3)-methylpseudouridine(1915) in 23S rRNA + S-adenosyl-L-homocysteine + H(+). Specifically methylates the pseudouridine at position 1915 (m3Psi1915) in 23S rRNA. This is Ribosomal RNA large subunit methyltransferase H from Nitrobacter hamburgensis (strain DSM 10229 / NCIMB 13809 / X14).